Here is a 304-residue protein sequence, read N- to C-terminus: Protein YIF1B (304 aa).

Over 1–146 (MMEYPNQSGF…APRFDINAPD (146 aa)) the chain is Cytoplasmic. Positions 21–54 (MRGSAMEPSDPTQLFDDTSSGVNKHEPGRVGKSP) are disordered. The segment covering 30 to 42 (DPTQLFDDTSSGV) has biased composition (polar residues). Residues 147-167 (LYIPVMGFITYVLVAGLALGT) form a helical membrane-spanning segment. The Extracellular portion of the chain corresponds to 168 to 182 (QNRFSPEILGIQASS). Residues 183-203 (ALVWLIIEVLAVLLSLYLVTV) form a helical membrane-spanning segment. The Cytoplasmic segment spans residues 204 to 212 (NTDLTTIDL). A helical transmembrane segment spans residues 213 to 233 (VAFSGYKYVGMIVGVVAGLLF). Topologically, residues 234-236 (GRT) are extracellular. Residues 237–257 (GYYLALLWFCASIFVFTIRTL) traverse the membrane as a helical segment. Residues 258–282 (RLKILSEAAAEGRLVRGTKNQLRMY) are Cytoplasmic-facing. The helical transmembrane segment at 283 to 303 (LTMAIAAAQPVFMYWLTFHLV) threads the bilayer. Residue Arg304 is a topological domain, extracellular.

This sequence belongs to the YIF1 family.

The protein resides in the endoplasmic reticulum membrane. It localises to the golgi apparatus membrane. The protein localises to the endoplasmic reticulum-Golgi intermediate compartment membrane. Functions in endoplasmic reticulum to Golgi vesicle-mediated transport and regulates the proper organization of the endoplasmic reticulum and the Golgi. Plays a key role in targeting to neuronal dendrites receptors such as HTR1A. Plays also a role in primary cilium and sperm flagellum assembly probably through protein transport to these compartments. This Danio rerio (Zebrafish) protein is Protein YIF1B (yif1b).